The sequence spans 480 residues: MGENTVPQKSSDNVGSIVALMVALLVAIFAFQLNASMLSPALVTMQAQLHTTASSIALTQTIFFTAAALFALFLPRLADLIGRKKVLIGMLTLTMIGCLISGFATNVGILMIGRILQGAAGPVVPLCLIILHVKVRDEKRYAKLMAILTSINGGIAGVDALAGGWLVSHGGFRSVFFVMGITAALAILLVSFGTQESTAKDTPKMDWTGVILLVVAMGALLSAVNALQGSFGNLGLPNWLLASILALLGLICFVGFWQVEKRVNHPMVPIHYLKQRRTWGLLITTLLTMTGVFAIMNGIIPALGQDGKFGLGLGADMVSLVTLTPYALAGLFFGPVSGFLAARFGFAKVLRVGLLTTIIGIVLAVAGVLQPSIWLLLLVSTFIGITYAGITNIMLNGLGIVLSPEDNPGYLPGLNAGMFNLGAGLSFIILYAVPTVLHTSVGGSSSGYISGIVTGLILVIIAFFTSFLIPDSKDCKINLE.

14 helical membrane-spanning segments follow: residues 14–34, 55–75, 93–113, 115–135, 147–167, 174–194, 207–227, 239–259, 280–300, 320–340, 358–378, 382–402, 417–437, and 449–469; these read VGSI…FQLN, SIAL…LFLP, LTMI…LMIG, ILQG…HVKV, ILTS…GWLV, SVFF…SFGT, WTGV…VNAL, WLLA…FWQV, GLLI…NGII, LVTL…SGFL, IIGI…LLLL, FIGI…GIVL, GMFN…PTVL, and ISGI…SFLI.

It belongs to the major facilitator superfamily. EmrB family.

Its subcellular location is the cell membrane. Responsible for the uptake of uridine and deoxyuridine. Not involved in purine nucleoside uptake. This is Uridine/deoxyuridine transporter from Lactococcus lactis subsp. cremoris (strain MG1363).